A 120-amino-acid polypeptide reads, in one-letter code: Chemokine vCXCL1 (120 aa).

This sequence belongs to the intercrine alpha (chemokine CxC) family. As to quaternary structure, interacts with host CXCR1 and CXCR2.

Its function is as follows. Acts as a functional chemokine, inducing calcium mobilization, chemotaxis, and degranulation of neutrophils. Contributes to the induction of neutrophil chemotaxis by interacting with host CXCR1 and CXCR2 receptors. This chain is Chemokine vCXCL1 (UL146), found in Human cytomegalovirus (strain Merlin) (HHV-5).